Reading from the N-terminus, the 327-residue chain is Phenylalanine--tRNA ligase alpha subunit (327 aa).

Residue Glu-252 participates in Mg(2+) binding.

Belongs to the class-II aminoacyl-tRNA synthetase family. Phe-tRNA synthetase alpha subunit type 1 subfamily. As to quaternary structure, tetramer of two alpha and two beta subunits. Mg(2+) is required as a cofactor.

The protein localises to the cytoplasm. It catalyses the reaction tRNA(Phe) + L-phenylalanine + ATP = L-phenylalanyl-tRNA(Phe) + AMP + diphosphate + H(+). This chain is Phenylalanine--tRNA ligase alpha subunit, found in Edwardsiella ictaluri (strain 93-146).